We begin with the raw amino-acid sequence, 274 residues long: Rhamnulose-1-phosphate aldolase (274 aa).

Glu117 is an active-site residue. Residues His141, His143, and His212 each coordinate Zn(2+).

It belongs to the aldolase class II family. RhaD subfamily. Homotetramer. Requires Zn(2+) as cofactor.

It is found in the cytoplasm. It carries out the reaction L-rhamnulose 1-phosphate = (S)-lactaldehyde + dihydroxyacetone phosphate. It functions in the pathway carbohydrate degradation; L-rhamnose degradation; glycerone phosphate from L-rhamnose: step 3/3. Catalyzes the reversible cleavage of L-rhamnulose-1-phosphate to dihydroxyacetone phosphate (DHAP) and L-lactaldehyde. The polypeptide is Rhamnulose-1-phosphate aldolase (Escherichia fergusonii (strain ATCC 35469 / DSM 13698 / CCUG 18766 / IAM 14443 / JCM 21226 / LMG 7866 / NBRC 102419 / NCTC 12128 / CDC 0568-73)).